The following is a 688-amino-acid chain: DNA ligase (688 aa).

Residues 51–55, 100–101, and Glu129 contribute to the NAD(+) site; these read DSEYD and SL. The active-site N6-AMP-lysine intermediate is Lys131. 4 residues coordinate NAD(+): Arg152, Glu189, Lys308, and Lys332. The Zn(2+) site is built by Cys426, Cys429, Cys444, and Cys450. The 80-residue stretch at 609-688 folds into the BRCT domain; sequence ADEQPLKGQT…DELLALLANS (80 aa).

Belongs to the NAD-dependent DNA ligase family. LigA subfamily. It depends on Mg(2+) as a cofactor. The cofactor is Mn(2+).

The catalysed reaction is NAD(+) + (deoxyribonucleotide)n-3'-hydroxyl + 5'-phospho-(deoxyribonucleotide)m = (deoxyribonucleotide)n+m + AMP + beta-nicotinamide D-nucleotide.. Functionally, DNA ligase that catalyzes the formation of phosphodiester linkages between 5'-phosphoryl and 3'-hydroxyl groups in double-stranded DNA using NAD as a coenzyme and as the energy source for the reaction. It is essential for DNA replication and repair of damaged DNA. This Shewanella sp. (strain MR-7) protein is DNA ligase.